We begin with the raw amino-acid sequence, 461 residues long: Spermidine coumaroyl-CoA acyltransferase (461 aa).

Catalysis depends on proton acceptor residues His168 and Asp393.

Belongs to the plant acyltransferase family. In terms of assembly, monomer. Mainly expressed in roots at low levels, specifically, in the root tip.

It catalyses the reaction 2 (E)-4-coumaroyl-CoA + spermidine = N(1),N(8)-bis(coumaroyl)-spermidine + 2 CoA + 2 H(+). The protein operates within amine and polyamine metabolism; spermidine metabolism. Its function is as follows. Spermidine coumaroyl-CoA acyltransferase that mediates the conversion of spermidine into dicoumaroyl-spermidine. This is Spermidine coumaroyl-CoA acyltransferase from Arabidopsis thaliana (Mouse-ear cress).